A 534-amino-acid chain; its full sequence is ATP synthase subunit beta 2 (534 aa).

Polar residues predominate over residues 1 to 10; it reads MADPQATNGT. Positions 1–30 are disordered; the sequence is MADPQATNGTGAACAERDASDVGDVSDVGD. Residue 185 to 192 coordinates ATP; the sequence is GGAGVGKT. Residues 494–505 are compositionally biased toward basic and acidic residues; it reads AAAREADARREA. Positions 494–534 are disordered; sequence AAAREADARREAAAAASGAGPGTTSDPASGSAEPQGARHGR.

This sequence belongs to the ATPase alpha/beta chains family. As to quaternary structure, F-type ATPases have 2 components, CF(1) - the catalytic core - and CF(0) - the membrane proton channel. CF(1) has five subunits: alpha(3), beta(3), gamma(1), delta(1), epsilon(1). CF(0) has three main subunits: a(1), b(2) and c(9-12). The alpha and beta chains form an alternating ring which encloses part of the gamma chain. CF(1) is attached to CF(0) by a central stalk formed by the gamma and epsilon chains, while a peripheral stalk is formed by the delta and b chains.

It localises to the cell inner membrane. The enzyme catalyses ATP + H2O + 4 H(+)(in) = ADP + phosphate + 5 H(+)(out). Its function is as follows. Produces ATP from ADP in the presence of a proton gradient across the membrane. The catalytic sites are hosted primarily by the beta subunits. The chain is ATP synthase subunit beta 2 from Burkholderia pseudomallei (strain 668).